A 510-amino-acid chain; its full sequence is Major facilitator superfamily domain-containing protein 4A (510 aa).

12 helical membrane-spanning segments follow: residues 19-39, 53-73, 82-102, 107-127, 139-159, 218-238, 303-323, 345-365, 380-400, 401-421, 434-454, and 462-482; these read LTYWSVFFSFGLCIAFLGPTL, ISWVFFSQQLCLLLGSALGGV, LWALFTSTLVISLVFAVIPFC, VLASVIALAGLAMGCIDTVAN, AFFLQVLHFFVGLGALLSPLI, YAFWIMALINLPVPLAVLFLL, FFAIHITAALVLFMTDGMMGA, GYLPSLFWGFITLGRFISIPV, VGVVVTFLMLLIFSYNVIFLF, VGTASLGLFLSSTFPSMLAYT, VLVTGAGIGEMVLQMLVGLIF, and FLVCGVIFGCLAFIFYILLLF.

The protein belongs to the major facilitator superfamily.

Its subcellular location is the membrane. This is Major facilitator superfamily domain-containing protein 4A from Mus musculus (Mouse).